We begin with the raw amino-acid sequence, 194 residues long: Fe/S biogenesis protein NfuA (194 aa).

Positions 152 and 155 each coordinate [4Fe-4S] cluster.

It belongs to the NfuA family. In terms of assembly, homodimer. [4Fe-4S] cluster serves as cofactor.

Involved in iron-sulfur cluster biogenesis. Binds a 4Fe-4S cluster, can transfer this cluster to apoproteins, and thereby intervenes in the maturation of Fe/S proteins. Could also act as a scaffold/chaperone for damaged Fe/S proteins. In Pseudomonas putida (strain ATCC 700007 / DSM 6899 / JCM 31910 / BCRC 17059 / LMG 24140 / F1), this protein is Fe/S biogenesis protein NfuA.